A 346-amino-acid chain; its full sequence is Upstream stimulatory factor 2 (346 aa).

Disordered regions lie at residues 1–44 (MDML…PGAE) and 215–244 (APRT…NEVE). Residues 11-20 (AASATAAAAA) show a composition bias toward low complexity. Residues 226–244 (DGTRTPRDERRRAQHNEVE) show a composition bias toward basic and acidic residues. The bHLH domain occupies 235-290 (RRRAQHNEVERRRRDKINNWIVQLSKIIPDCNADNSKTGASKGGILSKACDYIREL). The tract at residues 307–328 (LQMDNELLRQQIEELKNENALL) is leucine-zipper.

As to quaternary structure, interacts with MAF. Efficient DNA binding requires dimerization with another bHLH protein. Binds DNA as a homodimer or a heterodimer (USF1/USF2). In vivo, the USF1/USF2A heterodimer represents over 66% of the usf binding activity whereas the USF1 and USF2A homodimers represent less than 10%. The USF1/USF2B heterodimer accounted for almost 15% in some cell. As to expression, ubiquitous.

Its subcellular location is the nucleus. In terms of biological role, transcription factor that binds to a symmetrical DNA sequence (E-boxes) (5'-CACGTG-3') that is found in a variety of viral and cellular promoters. The chain is Upstream stimulatory factor 2 (USF2) from Homo sapiens (Human).